The primary structure comprises 239 residues: Uridylate kinase (239 aa).

13 to 16 (KLSG) lines the ATP pocket. Residue Gly-55 coordinates UMP. 2 residues coordinate ATP: Gly-56 and Arg-60. Residues Asp-75 and 136-143 (TGNPFFTT) contribute to the UMP site. Residues Thr-163, Tyr-169, and Asp-172 each coordinate ATP.

Belongs to the UMP kinase family. As to quaternary structure, homohexamer.

The protein localises to the cytoplasm. It carries out the reaction UMP + ATP = UDP + ADP. Its pathway is pyrimidine metabolism; CTP biosynthesis via de novo pathway; UDP from UMP (UMPK route): step 1/1. Inhibited by UTP. Functionally, catalyzes the reversible phosphorylation of UMP to UDP. The chain is Uridylate kinase from Chromobacterium violaceum (strain ATCC 12472 / DSM 30191 / JCM 1249 / CCUG 213 / NBRC 12614 / NCIMB 9131 / NCTC 9757 / MK).